Here is a 95-residue protein sequence, read N- to C-terminus: Pyrimidine/purine nucleoside phosphorylase (95 aa).

Belongs to the nucleoside phosphorylase PpnP family.

The catalysed reaction is a purine D-ribonucleoside + phosphate = a purine nucleobase + alpha-D-ribose 1-phosphate. It carries out the reaction adenosine + phosphate = alpha-D-ribose 1-phosphate + adenine. It catalyses the reaction cytidine + phosphate = cytosine + alpha-D-ribose 1-phosphate. The enzyme catalyses guanosine + phosphate = alpha-D-ribose 1-phosphate + guanine. The catalysed reaction is inosine + phosphate = alpha-D-ribose 1-phosphate + hypoxanthine. It carries out the reaction thymidine + phosphate = 2-deoxy-alpha-D-ribose 1-phosphate + thymine. It catalyses the reaction uridine + phosphate = alpha-D-ribose 1-phosphate + uracil. The enzyme catalyses xanthosine + phosphate = alpha-D-ribose 1-phosphate + xanthine. In terms of biological role, catalyzes the phosphorolysis of diverse nucleosides, yielding D-ribose 1-phosphate and the respective free bases. Can use uridine, adenosine, guanosine, cytidine, thymidine, inosine and xanthosine as substrates. Also catalyzes the reverse reactions. In Enterobacter sp. (strain 638), this protein is Pyrimidine/purine nucleoside phosphorylase.